The primary structure comprises 180 residues: Large ribosomal subunit protein uL5 (180 aa).

It belongs to the universal ribosomal protein uL5 family. Part of the 50S ribosomal subunit; part of the 5S rRNA/L5/L18/L25 subcomplex. Contacts the 5S rRNA and the P site tRNA. Forms a bridge to the 30S subunit in the 70S ribosome.

In terms of biological role, this is one of the proteins that bind and probably mediate the attachment of the 5S RNA into the large ribosomal subunit, where it forms part of the central protuberance. In the 70S ribosome it contacts protein S13 of the 30S subunit (bridge B1b), connecting the 2 subunits; this bridge is implicated in subunit movement. Contacts the P site tRNA; the 5S rRNA and some of its associated proteins might help stabilize positioning of ribosome-bound tRNAs. The sequence is that of Large ribosomal subunit protein uL5 from Stenotrophomonas maltophilia (strain K279a).